We begin with the raw amino-acid sequence, 297 residues long: Protoheme IX farnesyltransferase 1 (297 aa).

9 consecutive transmembrane segments (helical) span residues 23–43 (VVVL…RAGV), 45–65 (WSVL…AAVV), 93–113 (LPAL…LLVF), 117–137 (LTAW…TGFL), 145–165 (IVIG…AVSG), 171–191 (PLLL…ALAI), 216–236 (LHIL…YAIH), 241–261 (LYLA…WVLY), and 277–297 (IGYL…LLSL).

The protein belongs to the UbiA prenyltransferase family. Protoheme IX farnesyltransferase subfamily.

It is found in the cell inner membrane. The catalysed reaction is heme b + (2E,6E)-farnesyl diphosphate + H2O = Fe(II)-heme o + diphosphate. Its pathway is porphyrin-containing compound metabolism; heme O biosynthesis; heme O from protoheme: step 1/1. Functionally, converts heme B (protoheme IX) to heme O by substitution of the vinyl group on carbon 2 of heme B porphyrin ring with a hydroxyethyl farnesyl side group. The chain is Protoheme IX farnesyltransferase 1 from Pseudomonas putida (strain ATCC 700007 / DSM 6899 / JCM 31910 / BCRC 17059 / LMG 24140 / F1).